The sequence spans 305 residues: UDP-3-O-acyl-N-acetylglucosamine deacetylase (305 aa).

His-78, His-237, and Asp-241 together coordinate Zn(2+). The active-site Proton donor is the His-264.

This sequence belongs to the LpxC family. Requires Zn(2+) as cofactor.

The enzyme catalyses a UDP-3-O-[(3R)-3-hydroxyacyl]-N-acetyl-alpha-D-glucosamine + H2O = a UDP-3-O-[(3R)-3-hydroxyacyl]-alpha-D-glucosamine + acetate. It functions in the pathway glycolipid biosynthesis; lipid IV(A) biosynthesis; lipid IV(A) from (3R)-3-hydroxytetradecanoyl-[acyl-carrier-protein] and UDP-N-acetyl-alpha-D-glucosamine: step 2/6. Its function is as follows. Catalyzes the hydrolysis of UDP-3-O-myristoyl-N-acetylglucosamine to form UDP-3-O-myristoylglucosamine and acetate, the committed step in lipid A biosynthesis. This chain is UDP-3-O-acyl-N-acetylglucosamine deacetylase, found in Cupriavidus pinatubonensis (strain JMP 134 / LMG 1197) (Cupriavidus necator (strain JMP 134)).